The following is a 382-amino-acid chain: MKVPKTMLLSTAAGLLLSLTATSVSAHYVNEEHHFKVTAHTETDPVASGDDAADDPAIWVHEKHPEKSKLITTNKKSGLVVYDLDGKQLHSYEFGKLNNVDLRYDFPLNGEKIDIAAASNRSEGKNTIEVYAIDGDKGKLKSITDPNHPISTNISEVYGFSLYHSQKTGAFYALVTGKQGEFEQYEIVDGGKGYVTGKKVREFKLNSQTEGLVADDEYGNLYIAEEDEAIWKFNAEPGGGSKGQVVDRATGDHLTADIEGLTIYYAPNGKGYLMASSQGNNSYAMYERQGKNRYVANFEITDGEKIDGTSDTDGIDVLGFGLGPKYPYGIFVAQDGENIDNGQAVNQNFKIVSWEQIAQHLGEMPDLHKQVNPRKLKDRSDG.

A signal peptide spans 1–26; that stretch reads MKVPKTMLLSTAAGLLLSLTATSVSA. In terms of domain architecture, BPP spans 27–361; sequence HYVNEEHHFK…VSWEQIAQHL (335 aa).

The protein resides in the secreted. The catalysed reaction is 1D-myo-inositol hexakisphosphate + H2O = 1D-myo-inositol 1,2,4,5,6-pentakisphosphate + phosphate. In Bacillus subtilis (strain 168), this protein is 3-phytase (phy).